A 112-amino-acid polypeptide reads, in one-letter code: Protein preY, mitochondrial (112 aa).

The transit peptide at 1-34 (MLSATCRRLAPALRRLRALSAVAGRFLQVPGARL) directs the protein to the mitochondrion. The 47-residue stretch at 49 to 95 (HPALLQFLVCPLSKKPLRYEASTNELVNEELGIAYPIIDGIPNMIPQ) folds into the TRM112 domain.

This sequence belongs to the PREY family. Interacts (via TRM112 domain) with NDUFAF5; the interaction is direct and stabilizes NDUFAF5 protein. Interacts with COQ5; the interaction is direct, stabilizes COQ5 protein and associates PYURF with COQ enzyme complex.

The protein localises to the mitochondrion. Functionally, in mitochondria, S-adenosylmethionine-dependent methyltransferase chaperone that supports both coenzyme Q biosynthesis, by stabilizing its components, such as COQ5, and NADH:ubiquinone oxidoreductase complex (complex I, MT-ND1) assembly, by stabilizing complex I assembly factors, such as NDUFAF5. In Mus musculus (Mouse), this protein is Protein preY, mitochondrial (Pyurf).